The chain runs to 547 residues: uncharacterized protein (547 aa).

The Extracellular segment spans residues 1 to 21; that stretch reads MVKKHQNSKMGNTNHFGHLKS. Residues 22–42 form a helical membrane-spanning segment; it reads FVGGNVVALGAGTPYLFSFYA. At 43–58 the chain is on the cytoplasmic side; sequence PQLLSKCHIPVSASSK. A helical transmembrane segment spans residues 59–79; it reads LSFSLTIGSSLMGILAGIVVD. The Extracellular portion of the chain corresponds to 80–83; it reads RSPK. The helical transmembrane segment at 84-104 threads the bilayer; sequence LSCLIGSMCVFIAYLILNLCY. At 105–110 the chain is on the cytoplasmic side; that stretch reads KHEWSS. A helical membrane pass occupies residues 111 to 131; it reads TFLISLSLVLIGYGSVSGFYA. The Extracellular segment spans residues 132-144; sequence SVKCANTNFPQHR. A helical membrane pass occupies residues 145–165; the sequence is GTAGAFPVSLYGLSGMVFSYL. The Cytoplasmic segment spans residues 166 to 175; sequence CSKLFGENIE. A helical transmembrane segment spans residues 176-196; the sequence is HVFIFLMVACGCMILVGYFSL. Over 197-323 the chain is Extracellular; it reads DIFSNAEGDD…LKSSTFIGYY (127 aa). At Ser237 the chain carries Phosphoserine. Positions 275–300 are disordered; it reads LLSPSSPHTKYDFEDENTSKNTVGEN. The chain crosses the membrane as a helical span at residues 324-344; that stretch reads IVLGILQGVGLMYIYSVGFMV. The Cytoplasmic segment spans residues 345–398; sequence QAQVSTPPLNQLPINAEKIQSLQVTLLSLLSFCGRLSSGPISDFLVKKFKAQRL. A helical transmembrane segment spans residues 399–419; the sequence is WNIVIASLLVFLASNKISHDF. Topologically, residues 420-437 are extracellular; sequence SSIEDPSLRASKSFKNIS. Residues 438–458 form a helical membrane-spanning segment; that stretch reads VCSAIFGYSFGVLFGTFPSIV. Over 459-469 the chain is Cytoplasmic; sequence ADRFGTNGYST. The helical transmembrane segment at 470-490 threads the bilayer; it reads LWGVLTTGGVFSVSVFTDILG. At 491-514 the chain is on the extracellular side; that stretch reads RDFKANTGDDDGNCKKGVLCYSYT. A helical transmembrane segment spans residues 515-535; the sequence is FMVTKYCAAFNLLFVLGIIGY. The Cytoplasmic segment spans residues 536–547; the sequence is TYYRRRATANSL.

It is found in the membrane. This is an uncharacterized protein from Saccharomyces cerevisiae (strain ATCC 204508 / S288c) (Baker's yeast).